Consider the following 142-residue polypeptide: Nucleoside diphosphate kinase (142 aa).

Residues K11, F59, R87, T93, R104, and N114 each coordinate ATP. Catalysis depends on H117, which acts as the Pros-phosphohistidine intermediate.

The protein belongs to the NDK family. As to quaternary structure, homotetramer. Mg(2+) serves as cofactor.

It localises to the cytoplasm. The catalysed reaction is a 2'-deoxyribonucleoside 5'-diphosphate + ATP = a 2'-deoxyribonucleoside 5'-triphosphate + ADP. The enzyme catalyses a ribonucleoside 5'-diphosphate + ATP = a ribonucleoside 5'-triphosphate + ADP. Major role in the synthesis of nucleoside triphosphates other than ATP. The ATP gamma phosphate is transferred to the NDP beta phosphate via a ping-pong mechanism, using a phosphorylated active-site intermediate. This chain is Nucleoside diphosphate kinase, found in Yersinia pestis bv. Antiqua (strain Antiqua).